The chain runs to 111 residues: Nucleoid-associated protein Cphamn1_1179 (111 aa).

It belongs to the YbaB/EbfC family. Homodimer.

It localises to the cytoplasm. The protein resides in the nucleoid. Its function is as follows. Binds to DNA and alters its conformation. May be involved in regulation of gene expression, nucleoid organization and DNA protection. This chain is Nucleoid-associated protein Cphamn1_1179, found in Chlorobium phaeobacteroides (strain BS1).